Consider the following 354-residue polypeptide: 3-dehydroquinate synthase (354 aa).

NAD(+) is bound by residues 106–110 (GVIGD), 130–131 (TS), lysine 143, and lysine 152. The Zn(2+) site is built by glutamate 185, histidine 246, and histidine 262.

The protein belongs to the sugar phosphate cyclases superfamily. Dehydroquinate synthase family. Requires Co(2+) as cofactor. Zn(2+) serves as cofactor. It depends on NAD(+) as a cofactor.

The protein resides in the cytoplasm. The catalysed reaction is 7-phospho-2-dehydro-3-deoxy-D-arabino-heptonate = 3-dehydroquinate + phosphate. It functions in the pathway metabolic intermediate biosynthesis; chorismate biosynthesis; chorismate from D-erythrose 4-phosphate and phosphoenolpyruvate: step 2/7. Functionally, catalyzes the conversion of 3-deoxy-D-arabino-heptulosonate 7-phosphate (DAHP) to dehydroquinate (DHQ). In Leuconostoc mesenteroides subsp. mesenteroides (strain ATCC 8293 / DSM 20343 / BCRC 11652 / CCM 1803 / JCM 6124 / NCDO 523 / NBRC 100496 / NCIMB 8023 / NCTC 12954 / NRRL B-1118 / 37Y), this protein is 3-dehydroquinate synthase.